A 151-amino-acid chain; its full sequence is Large ribosomal subunit protein uL15 (151 aa).

Basic residues predominate over residues 1–14 (MRREKKSRAYRGSR). The segment at 1–33 (MRREKKSRAYRGSRTHGWGRVGQHRKSGSRGGR) is disordered.

Belongs to the universal ribosomal protein uL15 family. Part of the 50S ribosomal subunit.

In terms of biological role, binds to the 23S rRNA. The chain is Large ribosomal subunit protein uL15 from Thermofilum pendens (strain DSM 2475 / Hrk 5).